A 96-amino-acid chain; its full sequence is Large ribosomal subunit protein eL14 (96 aa).

The protein belongs to the eukaryotic ribosomal protein eL14 family.

This is Large ribosomal subunit protein eL14 from Saccharolobus islandicus (strain Y.N.15.51 / Yellowstone #2) (Sulfolobus islandicus).